We begin with the raw amino-acid sequence, 268 residues long: Hydroxyethylthiazole kinase (268 aa).

M44 contacts substrate. Positions 119 and 165 each coordinate ATP. Residue G192 coordinates substrate.

This sequence belongs to the Thz kinase family. Mg(2+) is required as a cofactor.

It catalyses the reaction 5-(2-hydroxyethyl)-4-methylthiazole + ATP = 4-methyl-5-(2-phosphooxyethyl)-thiazole + ADP + H(+). It participates in cofactor biosynthesis; thiamine diphosphate biosynthesis; 4-methyl-5-(2-phosphoethyl)-thiazole from 5-(2-hydroxyethyl)-4-methylthiazole: step 1/1. Its function is as follows. Catalyzes the phosphorylation of the hydroxyl group of 4-methyl-5-beta-hydroxyethylthiazole (THZ). The protein is Hydroxyethylthiazole kinase of Corynebacterium glutamicum (strain R).